Consider the following 84-residue polypeptide: U4-theraphotoxin-Hhn1n (84 aa).

Residues 1 to 22 (MKVTLIAILTCAAVLVLHTTAA) form the signal peptide. A propeptide spanning residues 23–47 (EELEESQLMEVGMPDTELAAVDEER) is cleaved from the precursor. Cystine bridges form between C51/C65, C55/C76, and C70/C81.

This sequence belongs to the neurotoxin 12 (Hwtx-2) family. 02 (Hwtx-2) subfamily. As to expression, expressed by the venom gland.

It is found in the secreted. Functionally, postsynaptic neurotoxin. This chain is U4-theraphotoxin-Hhn1n, found in Cyriopagopus hainanus (Chinese bird spider).